The primary structure comprises 313 residues: Aspartate carbamoyltransferase catalytic subunit (313 aa).

The carbamoyl phosphate site is built by Arg-58 and Thr-59. Residue Lys-86 coordinates L-aspartate. Carbamoyl phosphate contacts are provided by Arg-108, His-136, and Gln-139. Residues Arg-169 and Arg-223 each contribute to the L-aspartate site. The carbamoyl phosphate site is built by Gly-265 and Pro-266.

The protein belongs to the aspartate/ornithine carbamoyltransferase superfamily. ATCase family. As to quaternary structure, heterododecamer (2C3:3R2) of six catalytic PyrB chains organized as two trimers (C3), and six regulatory PyrI chains organized as three dimers (R2).

The enzyme catalyses carbamoyl phosphate + L-aspartate = N-carbamoyl-L-aspartate + phosphate + H(+). It functions in the pathway pyrimidine metabolism; UMP biosynthesis via de novo pathway; (S)-dihydroorotate from bicarbonate: step 2/3. Functionally, catalyzes the condensation of carbamoyl phosphate and aspartate to form carbamoyl aspartate and inorganic phosphate, the committed step in the de novo pyrimidine nucleotide biosynthesis pathway. This Anaeromyxobacter dehalogenans (strain 2CP-1 / ATCC BAA-258) protein is Aspartate carbamoyltransferase catalytic subunit.